Here is a 617-residue protein sequence, read N- to C-terminus: Glutamyl-tRNA(Gln) amidotransferase subunit E (617 aa).

The protein belongs to the GatB/GatE family. GatE subfamily. As to quaternary structure, heterodimer of GatD and GatE.

The enzyme catalyses L-glutamyl-tRNA(Gln) + L-glutamine + ATP + H2O = L-glutaminyl-tRNA(Gln) + L-glutamate + ADP + phosphate + H(+). Its function is as follows. Allows the formation of correctly charged Gln-tRNA(Gln) through the transamidation of misacylated Glu-tRNA(Gln) in organisms which lack glutaminyl-tRNA synthetase. The reaction takes place in the presence of glutamine and ATP through an activated gamma-phospho-Glu-tRNA(Gln). The GatDE system is specific for glutamate and does not act on aspartate. The protein is Glutamyl-tRNA(Gln) amidotransferase subunit E of Natronomonas pharaonis (strain ATCC 35678 / DSM 2160 / CIP 103997 / JCM 8858 / NBRC 14720 / NCIMB 2260 / Gabara) (Halobacterium pharaonis).